The primary structure comprises 336 residues: Glyceraldehyde-3-phosphate dehydrogenase 1 (336 aa).

Residues 12–13 (RI), aspartate 34, and serine 120 contribute to the NAD(+) site. D-glyceraldehyde 3-phosphate contacts are provided by residues 150-152 (SCT), threonine 181, arginine 198, 211-212 (TG), and arginine 234. The Nucleophile role is filled by cysteine 151. Asparagine 316 lines the NAD(+) pocket.

The protein belongs to the glyceraldehyde-3-phosphate dehydrogenase family. Homotetramer.

It localises to the cytoplasm. It catalyses the reaction D-glyceraldehyde 3-phosphate + phosphate + NAD(+) = (2R)-3-phospho-glyceroyl phosphate + NADH + H(+). The protein operates within carbohydrate degradation; glycolysis; pyruvate from D-glyceraldehyde 3-phosphate: step 1/5. In terms of biological role, catalyzes the oxidative phosphorylation of glyceraldehyde 3-phosphate (G3P) to 1,3-bisphosphoglycerate (BPG) using the cofactor NAD. The first reaction step involves the formation of a hemiacetal intermediate between G3P and a cysteine residue, and this hemiacetal intermediate is then oxidized to a thioester, with concomitant reduction of NAD to NADH. The reduced NADH is then exchanged with the second NAD, and the thioester is attacked by a nucleophilic inorganic phosphate to produce BPG. This is Glyceraldehyde-3-phosphate dehydrogenase 1 (gapA1) from Staphylococcus epidermidis (strain ATCC 35984 / DSM 28319 / BCRC 17069 / CCUG 31568 / BM 3577 / RP62A).